Consider the following 323-residue polypeptide: Prenyl transferase (323 aa).

3 residues coordinate isopentenyl diphosphate: lysine 46, arginine 49, and histidine 81. Residues aspartate 88 and aspartate 92 each coordinate Mg(2+). Residue arginine 97 participates in an all-trans-polyprenyl diphosphate binding. Position 98 (arginine 98) interacts with isopentenyl diphosphate. Residues lysine 174, threonine 175, and glutamine 212 each coordinate an all-trans-polyprenyl diphosphate.

Belongs to the FPP/GGPP synthase family. Mg(2+) is required as a cofactor.

Possible role in synthesis of the nonaprenyl side chain of plastoquinone or in synthesis of other prenyl chains such as undekaprenyl pyrophosphate. This Synechocystis sp. (strain ATCC 27184 / PCC 6803 / Kazusa) protein is Prenyl transferase (preA).